A 440-amino-acid chain; its full sequence is Adenylosuccinate lyase (440 aa).

N(6)-(1,2-dicarboxyethyl)-AMP contacts are provided by residues 4–5 (RY), 67–69 (KHD), and 93–94 (TS). The active-site Proton donor/acceptor is the histidine 141. Glutamine 212 serves as a coordination point for N(6)-(1,2-dicarboxyethyl)-AMP. Serine 262 (proton donor/acceptor) is an active-site residue. Residues serine 263, 268-270 (KRN), asparagine 276, and 307-311 (SVERF) contribute to the N(6)-(1,2-dicarboxyethyl)-AMP site.

This sequence belongs to the lyase 1 family. Adenylosuccinate lyase subfamily. As to quaternary structure, homotetramer. Residues from neighboring subunits contribute catalytic and substrate-binding residues to each active site.

The enzyme catalyses N(6)-(1,2-dicarboxyethyl)-AMP = fumarate + AMP. It catalyses the reaction (2S)-2-[5-amino-1-(5-phospho-beta-D-ribosyl)imidazole-4-carboxamido]succinate = 5-amino-1-(5-phospho-beta-D-ribosyl)imidazole-4-carboxamide + fumarate. It functions in the pathway purine metabolism; AMP biosynthesis via de novo pathway; AMP from IMP: step 2/2. It participates in purine metabolism; IMP biosynthesis via de novo pathway; 5-amino-1-(5-phospho-D-ribosyl)imidazole-4-carboxamide from 5-amino-1-(5-phospho-D-ribosyl)imidazole-4-carboxylate: step 2/2. Functionally, catalyzes two reactions in de novo purine nucleotide biosynthesis. Catalyzes the breakdown of 5-aminoimidazole- (N-succinylocarboxamide) ribotide (SAICAR or 2-[5-amino-1-(5-phospho-beta-D-ribosyl)imidazole-4-carboxamido]succinate) to 5-aminoimidazole-4-carboxamide ribotide (AICAR or 5-amino-1-(5-phospho-beta-D-ribosyl)imidazole-4-carboxamide) and fumarate, and of adenylosuccinate (ADS or N(6)-(1,2-dicarboxyethyl)-AMP) to adenosine monophosphate (AMP) and fumarate. The chain is Adenylosuccinate lyase (purB) from Helicobacter pylori (strain J99 / ATCC 700824) (Campylobacter pylori J99).